A 481-amino-acid polypeptide reads, in one-letter code: Inosine-5'-monophosphate dehydrogenase (481 aa).

2 CBS domains span residues 92–148 and 152–209; these read VIND…SKKV and MTKM…PEAN. Residues Asp-244 and 293 to 295 each bind NAD(+); that span reads GIG. Residues Gly-295 and Gly-297 each coordinate K(+). Ser-298 provides a ligand contact to IMP. Cys-300 lines the K(+) pocket. Residue Cys-300 is the Thioimidate intermediate of the active site. Residues 333 to 335, 356 to 357, and 380 to 384 contribute to the IMP site; these read DGG, GS, and YRGMG. Arg-396 acts as the Proton acceptor in catalysis. Glu-410 is a binding site for IMP. The K(+) site is built by Glu-464, Ser-465, and His-466.

The protein belongs to the IMPDH/GMPR family. In terms of assembly, homotetramer. K(+) is required as a cofactor.

The enzyme catalyses IMP + NAD(+) + H2O = XMP + NADH + H(+). It participates in purine metabolism; XMP biosynthesis via de novo pathway; XMP from IMP: step 1/1. Its activity is regulated as follows. Mycophenolic acid (MPA) is a non-competitive inhibitor that prevents formation of the closed enzyme conformation by binding to the same site as the amobile flap. In contrast, mizoribine monophosphate (MZP) is a competitive inhibitor that induces the closed conformation. MPA is a potent inhibitor of mammalian IMPDHs but a poor inhibitor of the bacterial enzymes. MZP is a more potent inhibitor of bacterial IMPDH. Functionally, catalyzes the conversion of inosine 5'-phosphate (IMP) to xanthosine 5'-phosphate (XMP), the first committed and rate-limiting step in the de novo synthesis of guanine nucleotides, and therefore plays an important role in the regulation of cell growth. In Helicobacter pylori (strain ATCC 700392 / 26695) (Campylobacter pylori), this protein is Inosine-5'-monophosphate dehydrogenase.